The primary structure comprises 118 residues: MICOS complex subunit MIC13 (118 aa).

Residues 1–7 (MVARVWS) are Mitochondrial matrix-facing. Residues 8 to 26 (LMRFLIKGSVAGGAVYLVY) traverse the membrane as a helical segment. The Mitochondrial intermembrane portion of the chain corresponds to 27-118 (DQELLGPSDK…GWEYVKARTK (92 aa)).

This sequence belongs to the MICOS complex subunit Mic13 family. As to quaternary structure, component of the mitochondrial contact site and cristae organizing system (MICOS) complex, composed of at least MICOS10/MIC10, CHCHD3/MIC19, CHCHD6/MIC25, APOO/MIC26, MICOS13/MIC13, APOOL/MIC27 and IMMT/MIC60. The complex associates with mitochondrial outer membrane proteins SAMM50, MTX1 and MTX2, and with HSPA9.

It is found in the mitochondrion inner membrane. Its function is as follows. Component of the MICOS complex, a large protein complex of the mitochondrial inner membrane that plays crucial roles in the maintenance of crista junctions, inner membrane architecture, and formation of contact sites to the outer membrane. Constituent of mature MICOS complex, it is required for the formation of cristae junction (CJ) and maintenance of cristae morphology. Required for the incorporation of MICOS10/MIC10 into the MICOS complex. The protein is MICOS complex subunit MIC13 of Macaca fascicularis (Crab-eating macaque).